The sequence spans 265 residues: Catechol O-methyltransferase (265 aa).

The Cytoplasmic portion of the chain corresponds to 1-2 (ML). Residues 3–19 (LAAVSLGLLLLAFLLLL) traverse the membrane as a helical; Signal-anchor for type II membrane protein segment. Residues 20-265 (RHLGWGLVAI…QGPGSSPVKS (246 aa)) lie on the Extracellular side of the membrane. S-adenosyl-L-methionine contacts are provided by residues Val85, Glu107, Ser115, Glu133, Ile134, 160–163 (GASQ), Ser162, and Asp184. Residue Asp184 coordinates Mg(2+). Lys187 is a substrate binding site. Residues Asp212 and Asn213 each contribute to the Mg(2+) site. The substrate site is built by Asn213 and Glu242. Ser260, Ser261, and Ser265 each carry phosphoserine.

The protein belongs to the class I-like SAM-binding methyltransferase superfamily. Cation-dependent O-methyltransferase family. Requires Mg(2+) as cofactor.

It localises to the cytoplasm. Its subcellular location is the cell membrane. The catalysed reaction is a catechol + S-adenosyl-L-methionine = a guaiacol + S-adenosyl-L-homocysteine + H(+). It carries out the reaction 2-hydroxyestrone + S-adenosyl-L-methionine = 2-hydroxy-3-methoxy-estrone + S-adenosyl-L-homocysteine + H(+). The enzyme catalyses 4-hydroxyestrone + S-adenosyl-L-methionine = 4-methoxyestrone + S-adenosyl-L-homocysteine + H(+). It catalyses the reaction 2-hydroxyestrone + S-adenosyl-L-methionine = 2-methoxyestrone + S-adenosyl-L-homocysteine + H(+). The catalysed reaction is 4-hydroxy-17beta-estradiol + S-adenosyl-L-methionine = 4-methoxy-17beta-estradiol + S-adenosyl-L-homocysteine + H(+). It carries out the reaction 2-hydroxy-17beta-estradiol + S-adenosyl-L-methionine = 2-hydroxy-3-methoxy-17beta-estradiol + S-adenosyl-L-homocysteine + H(+). The enzyme catalyses 2-hydroxy-17beta-estradiol + S-adenosyl-L-methionine = 2-methoxy-17beta-estradiol + S-adenosyl-L-homocysteine + H(+). Functionally, catalyzes the O-methylation, and thereby the inactivation, of catecholamine neurotransmitters and catechol hormones. Also shortens the biological half-lives of certain neuroactive drugs, like L-DOPA, alpha-methyl DOPA and isoproterenol. The protein is Catechol O-methyltransferase of Mus musculus (Mouse).